Here is a 493-residue protein sequence, read N- to C-terminus: Ketol-acid reductoisomerase (NADP(+)) (493 aa).

Residues A15–S208 form the KARI N-terminal Rossmann domain. Residues C45–Q48, R68, R76, S78, and D108–Q110 contribute to the NADP(+) site. The active site involves H132. G158 contributes to the NADP(+) binding site. KARI C-terminal knotted domains follow at residues S209 to A344 and F345 to M486. Mg(2+) is bound by residues D217, E221, E389, and E393. S414 contacts substrate.

It belongs to the ketol-acid reductoisomerase family. Mg(2+) is required as a cofactor.

The catalysed reaction is (2R)-2,3-dihydroxy-3-methylbutanoate + NADP(+) = (2S)-2-acetolactate + NADPH + H(+). It catalyses the reaction (2R,3R)-2,3-dihydroxy-3-methylpentanoate + NADP(+) = (S)-2-ethyl-2-hydroxy-3-oxobutanoate + NADPH + H(+). It participates in amino-acid biosynthesis; L-isoleucine biosynthesis; L-isoleucine from 2-oxobutanoate: step 2/4. The protein operates within amino-acid biosynthesis; L-valine biosynthesis; L-valine from pyruvate: step 2/4. Its function is as follows. Involved in the biosynthesis of branched-chain amino acids (BCAA). Catalyzes an alkyl-migration followed by a ketol-acid reduction of (S)-2-acetolactate (S2AL) to yield (R)-2,3-dihydroxy-isovalerate. In the isomerase reaction, S2AL is rearranged via a Mg-dependent methyl migration to produce 3-hydroxy-3-methyl-2-ketobutyrate (HMKB). In the reductase reaction, this 2-ketoacid undergoes a metal-dependent reduction by NADPH to yield (R)-2,3-dihydroxy-isovalerate. This chain is Ketol-acid reductoisomerase (NADP(+)), found in Aeromonas hydrophila subsp. hydrophila (strain ATCC 7966 / DSM 30187 / BCRC 13018 / CCUG 14551 / JCM 1027 / KCTC 2358 / NCIMB 9240 / NCTC 8049).